The following is a 288-amino-acid chain: Probable aquaporin PIP1-2 (288 aa).

The disordered stretch occupies residues 1 to 37; it reads MEGKEEDVRLGANKFSERQPIGTAAQGSDDKDYKEPP. 2 consecutive transmembrane segments (helical) span residues 57–77 and 92–114; these read IAEF…VMGV and IAWS…SGGH. An NPA 1 motif is present at residues 116–118; sequence NPA. Transmembrane regions (helical) follow at residues 135-155, 177-197, and 211-231; these read LFYM…VKGF, GDGL…VFSA, and ILAP…TIPI. Residues 237 to 239 carry the NPA 2 motif; sequence NPA. A helical membrane pass occupies residues 259 to 279; the sequence is IFWVGPFIGAALAAIYHQVVI.

This sequence belongs to the MIP/aquaporin (TC 1.A.8) family. PIP (TC 1.A.8.11) subfamily. Expressed in roots, leaves and anthers.

Its subcellular location is the cell membrane. In terms of biological role, aquaporins facilitate the transport of water and small neutral solutes across cell membranes. The sequence is that of Probable aquaporin PIP1-2 (PIP1-2) from Oryza sativa subsp. japonica (Rice).